Here is a 339-residue protein sequence, read N- to C-terminus: D-glycero-alpha-D-manno-heptose 7-phosphate kinase (339 aa).

Residue 17-20 (GGTD) coordinates substrate. ATP contacts are provided by residues S57 and 110–116 (GSGLGGS). The Mg(2+) site is built by S116 and E148. The Proton acceptor role is filled by D160.

The protein belongs to the GHMP kinase family.

The enzyme catalyses D-glycero-alpha-D-manno-heptose 7-phosphate + ATP = D-glycero-alpha-D-manno-heptose 1,7-bisphosphate + ADP + H(+). It participates in nucleotide-sugar biosynthesis; GDP-D-glycero-alpha-D-manno-heptose biosynthesis; GDP-D-glycero-alpha-D-manno-heptose from D-glycero-alpha-D-manno-heptose 7-phosphate: step 1/3. The protein operates within capsule biogenesis; capsule polysaccharide biosynthesis. In terms of biological role, catalyzes the phosphorylation of D-glycero-alpha-D-manno-heptose 7-phosphate at the C-1 position to form D-glycero-alpha-D-manno-heptose 1,7-bisphosphate. The sequence is that of D-glycero-alpha-D-manno-heptose 7-phosphate kinase from Campylobacter jejuni subsp. jejuni serotype O:2 (strain ATCC 700819 / NCTC 11168).